We begin with the raw amino-acid sequence, 701 residues long: DNA ligase A (701 aa).

Residues 1-23 are disordered; that stretch reads MSEKATGEVEAELPEHPDADERR. NAD(+)-binding positions include 49 to 53, 99 to 100, and glutamate 129; these read DAEFD and SL. The active-site N6-AMP-lysine intermediate is the lysine 131. NAD(+) is bound by residues arginine 152, glutamate 192, lysine 308, and lysine 332. Zn(2+) is bound by residues cysteine 426, cysteine 429, cysteine 445, and cysteine 451. A BRCT domain is found at 615–701; the sequence is SIERTLEGLS…EQGPPVEPAE (87 aa).

Belongs to the NAD-dependent DNA ligase family. LigA subfamily. Mg(2+) is required as a cofactor. Requires Mn(2+) as cofactor.

The catalysed reaction is NAD(+) + (deoxyribonucleotide)n-3'-hydroxyl + 5'-phospho-(deoxyribonucleotide)m = (deoxyribonucleotide)n+m + AMP + beta-nicotinamide D-nucleotide.. In terms of biological role, DNA ligase that catalyzes the formation of phosphodiester linkages between 5'-phosphoryl and 3'-hydroxyl groups in double-stranded DNA using NAD as a coenzyme and as the energy source for the reaction. It is essential for DNA replication and repair of damaged DNA. Probably the only ligase required for non-homologous end joining (NHEJ) repair of 3-overhangs. The sequence is that of DNA ligase A from Mycolicibacterium smegmatis (strain ATCC 700084 / mc(2)155) (Mycobacterium smegmatis).